The following is a 102-amino-acid chain: Small ribosomal subunit protein eS24 (102 aa).

The protein belongs to the eukaryotic ribosomal protein eS24 family.

This Halorubrum lacusprofundi (strain ATCC 49239 / DSM 5036 / JCM 8891 / ACAM 34) protein is Small ribosomal subunit protein eS24.